Reading from the N-terminus, the 172-residue chain is Ribosome maturation factor RimM (172 aa).

Residues 94-167 (ENEFYLFQLK…FIKVELLPGM (74 aa)) enclose the PRC barrel domain.

It belongs to the RimM family. As to quaternary structure, binds ribosomal protein uS19.

The protein localises to the cytoplasm. Its function is as follows. An accessory protein needed during the final step in the assembly of 30S ribosomal subunit, possibly for assembly of the head region. Essential for efficient processing of 16S rRNA. May be needed both before and after RbfA during the maturation of 16S rRNA. It has affinity for free ribosomal 30S subunits but not for 70S ribosomes. The chain is Ribosome maturation factor RimM from Carboxydothermus hydrogenoformans (strain ATCC BAA-161 / DSM 6008 / Z-2901).